Consider the following 612-residue polypeptide: Chaperone protein DnaK (612 aa).

The residue at position 174 (Thr174) is a Phosphothreonine; by autocatalysis. Positions 578-612 are disordered; it reads GAQAGAQGQGAAGGQKQDGNVYDADYKVVDDDKKE. The span at 601 to 612 shows a compositional bias: basic and acidic residues; the sequence is ADYKVVDDDKKE.

It belongs to the heat shock protein 70 family.

Functionally, acts as a chaperone. The polypeptide is Chaperone protein DnaK (Moorella thermoacetica (strain ATCC 39073 / JCM 9320)).